The chain runs to 544 residues: Esterase P (544 aa).

The N-terminal stretch at 1 to 19 (MSIFKRLLCLTLLWIAALE) is a signal peptide. N-linked (GlcNAc...) asparagine glycosylation is present at asparagine 75. Cysteine 83 and cysteine 102 are disulfide-bonded. Asparagine 114 carries N-linked (GlcNAc...) asparagine glycosylation. Catalysis depends on serine 206, which acts as the Acyl-ester intermediate. The cysteines at positions 258 and 270 are disulfide-linked. Asparagine 262 and asparagine 456 each carry an N-linked (GlcNAc...) asparagine glycan. Catalysis depends on histidine 466, which acts as the Charge relay system. A disulfide bridge links cysteine 514 with cysteine 535.

Belongs to the type-B carboxylesterase/lipase family. Monomer.

The protein resides in the secreted. It carries out the reaction a carboxylic ester + H2O = an alcohol + a carboxylate + H(+). The chain is Esterase P (Est-P) from Drosophila melanogaster (Fruit fly).